Consider the following 304-residue polypeptide: UPF0282 protein TSIB_1029 (304 aa).

It belongs to the UPF0282 family.

In Thermococcus sibiricus (strain DSM 12597 / MM 739), this protein is UPF0282 protein TSIB_1029.